A 335-amino-acid chain; its full sequence is N-acetyl-gamma-glutamyl-phosphate reductase (335 aa).

The active site involves Cys-147.

The protein belongs to the NAGSA dehydrogenase family. Type 1 subfamily.

It localises to the cytoplasm. The catalysed reaction is N-acetyl-L-glutamate 5-semialdehyde + phosphate + NADP(+) = N-acetyl-L-glutamyl 5-phosphate + NADPH + H(+). The protein operates within amino-acid biosynthesis; L-arginine biosynthesis; N(2)-acetyl-L-ornithine from L-glutamate: step 3/4. Functionally, catalyzes the NADPH-dependent reduction of N-acetyl-5-glutamyl phosphate to yield N-acetyl-L-glutamate 5-semialdehyde. The polypeptide is N-acetyl-gamma-glutamyl-phosphate reductase (Sulfurovum sp. (strain NBC37-1)).